Here is an 819-residue protein sequence, read N- to C-terminus: MSNIQNMSLEDIMGERFGRYSKYIIQERALPDIRDGLKPVQRRILYSMNKDGNTFEKGYRKSAKSVGNIMGNFHPHGDSSIYDAMVRMSQDWKNREILVEMHGNNGSMDGDPPAAMRYTEARLSEIAGYLLQDIEKNTVSFAWNFDDTEKEPTVLPAAFPNLLVNGSSGISAGYATDIPPHNLSEVIDAVVYMIDHPKASLEKLMEFLPGPDFPTGGIIQGADEIKKAYETGKGRVVVRSRTEIEELKGGKQQIIVTEIPYEVNKAVLVKKIDDVRVNNKVPGIVEVRDESDRTGLRIAIELKKEADSQTILNYLLKYTDLQVNYNFNMVAIDHFTPRQVGLQKILSSYISHRKDIIIERSKFDKAKAEKRLHIVEGLIRVLSILDEIIALIRSSDNKADAKENLKVSYDFSEEQAEAIVTLQLYRLTNTDIVTLQNEENDLRDLITTLSAIIGDEATMYNVMKRELREVKKKFANPRLSELQAESQIIEIDTASLIAEEETFVSVTRGGYLKRTSPRSFNASSLEEVGKRDDDELIFVKQAKTTEHLLLFTTLGNVIYRPIHELTDLRWKDIGEHLSQTISNFATEEEILYADIVTSFDQGLYVAVTQNGFIKRFDRKELSPWRTYKSKSTKYVKLKDDKDRVVTLSPVIMEDLLLVTKNGYALRFSSQEVPIQGLKSAGVKGINLKNDDSLASAFAVTSNSFFVLTQRGSLKRMAVDDIPQTSRANRGLLVLRELKTKPHRVFLAGGVQSDTSAEQFDLFTDIPEEETNQQMLEVISKTGQTYEIALETLSLSERTSNGSFISDTISDQEVLVARTR.

Positions Leu30–Leu496 constitute a Topo IIA-type catalytic domain. Tyr118 (O-(5'-phospho-DNA)-tyrosine intermediate) is an active-site residue.

Belongs to the type II topoisomerase GyrA/ParC subunit family. ParC type 2 subfamily. In terms of assembly, heterotetramer composed of ParC and ParE.

It localises to the cell membrane. The enzyme catalyses ATP-dependent breakage, passage and rejoining of double-stranded DNA.. Its function is as follows. Topoisomerase IV is essential for chromosome segregation. It relaxes supercoiled DNA. Performs the decatenation events required during the replication of a circular DNA molecule. The protein is DNA topoisomerase 4 subunit A of Streptococcus pyogenes serotype M3 (strain ATCC BAA-595 / MGAS315).